The sequence spans 257 residues: Phosphonates import ATP-binding protein PhnC (257 aa).

The ABC transporter domain occupies 2–246; sequence IEFRNVSKVY…KFAEIYGDVA (245 aa). Position 35–42 (35–42) interacts with ATP; that stretch reads GLSGAGKS.

The protein belongs to the ABC transporter superfamily. Phosphonates importer (TC 3.A.1.9.1) family. As to quaternary structure, the complex is composed of two ATP-binding proteins (PhnC), two transmembrane proteins (PhnE) and a solute-binding protein (PhnD).

The protein resides in the cell membrane. It carries out the reaction phosphonate(out) + ATP + H2O = phosphonate(in) + ADP + phosphate + H(+). Functionally, part of the ABC transporter complex PhnCDE involved in phosphonates import. Responsible for energy coupling to the transport system. The polypeptide is Phosphonates import ATP-binding protein PhnC (Bacillus thuringiensis subsp. konkukian (strain 97-27)).